Here is a 353-residue protein sequence, read N- to C-terminus: Probable butyrate kinase (353 aa).

It belongs to the acetokinase family.

The protein resides in the cytoplasm. The catalysed reaction is butanoate + ATP = butanoyl phosphate + ADP. This is Probable butyrate kinase from Bacteroides thetaiotaomicron (strain ATCC 29148 / DSM 2079 / JCM 5827 / CCUG 10774 / NCTC 10582 / VPI-5482 / E50).